The following is a 229-amino-acid chain: 1-Cys peroxiredoxin PER1 (229 aa).

Positions 4 to 173 (LTIGDTVPNL…VLRAVDSLLT (170 aa)) constitute a Thioredoxin domain. Cys-46 acts as the Cysteine sulfenic acid (-SOH) intermediate in catalysis. The short motif at 205–228 (RKMFPQGFETADLPSKKGYLRFTK) is the Bipartite nuclear localization signal element.

It belongs to the peroxiredoxin family. Prx6 subfamily.

The protein resides in the nucleus. It is found in the cytoplasm. The catalysed reaction is a hydroperoxide + [thioredoxin]-dithiol = an alcohol + [thioredoxin]-disulfide + H2O. In terms of biological role, thiol-specific peroxidase that catalyzes the reduction of hydrogen peroxide and organic hydroperoxides to water and alcohols, respectively. Seems to contribute to the inhibition of germination during stress. The protein is 1-Cys peroxiredoxin PER1 (PER1) of Zea mays (Maize).